A 367-amino-acid chain; its full sequence is Ganglioside-induced differentiation-associated protein 1-like 1 (367 aa).

The 82-residue stretch at 45–126 (ESLVLYHWTQ…YVERTFTGEH (82 aa)) folds into the GST N-terminal domain. Positions 174–341 (PKYATAEIRR…RLVKRKPPSF (168 aa)) constitute a GST C-terminal domain.

This sequence belongs to the GST superfamily.

The protein is Ganglioside-induced differentiation-associated protein 1-like 1 (GDAP1L1) of Homo sapiens (Human).